The chain runs to 251 residues: Hydroxyacylglutathione hydrolase (251 aa).

Residues H53, H55, D57, H58, H110, D127, and H165 each coordinate Zn(2+).

This sequence belongs to the metallo-beta-lactamase superfamily. Glyoxalase II family. As to quaternary structure, monomer. Requires Zn(2+) as cofactor.

It catalyses the reaction an S-(2-hydroxyacyl)glutathione + H2O = a 2-hydroxy carboxylate + glutathione + H(+). It functions in the pathway secondary metabolite metabolism; methylglyoxal degradation; (R)-lactate from methylglyoxal: step 2/2. Functionally, thiolesterase that catalyzes the hydrolysis of S-D-lactoyl-glutathione to form glutathione and D-lactic acid. This is Hydroxyacylglutathione hydrolase from Erwinia tasmaniensis (strain DSM 17950 / CFBP 7177 / CIP 109463 / NCPPB 4357 / Et1/99).